Reading from the N-terminus, the 314-residue chain is Aryldialkylphosphatase (314 aa).

The Fe cation site is built by His22, His24, and Lys137. Co(2+) is bound by residues Lys137, His170, and His199. Residue Lys137 is modified to N6-carboxylysine. Asp256 is a Fe cation binding site.

It belongs to the metallo-dependent hydrolases superfamily. Phosphotriesterase family. In terms of assembly, homodimer. Co(2+) is required as a cofactor. It depends on Fe cation as a cofactor.

It catalyses the reaction An aryl dialkyl phosphate + H2O = dialkyl phosphate + an aryl alcohol.. With respect to regulation, inactivated by EDTA and o-phenanthroline. Its function is as follows. Has a low paraoxonase activity. Also active, but with a lower activity, against other organo-phosphorus insecticides such as Dursban, Coumaphos, pNP-butanoate or parathion. The protein is Aryldialkylphosphatase (php) of Saccharolobus solfataricus (strain ATCC 35092 / DSM 1617 / JCM 11322 / P2) (Sulfolobus solfataricus).